Reading from the N-terminus, the 176-residue chain is Large ribosomal subunit protein bL17m (176 aa).

The transit peptide at 1–8 (MRLSLAAA) directs the protein to the mitochondrion.

Belongs to the bacterial ribosomal protein bL17 family. As to quaternary structure, component of the mitochondrial ribosome large subunit (39S) which comprises a 16S rRNA and about 50 distinct proteins.

It localises to the mitochondrion. In Mus musculus (Mouse), this protein is Large ribosomal subunit protein bL17m (Mrpl17).